Consider the following 204-residue polypeptide: ATP phosphoribosyltransferase (204 aa).

It belongs to the ATP phosphoribosyltransferase family. Short subfamily. Heteromultimer composed of HisG and HisZ subunits.

It localises to the cytoplasm. It catalyses the reaction 1-(5-phospho-beta-D-ribosyl)-ATP + diphosphate = 5-phospho-alpha-D-ribose 1-diphosphate + ATP. Its pathway is amino-acid biosynthesis; L-histidine biosynthesis; L-histidine from 5-phospho-alpha-D-ribose 1-diphosphate: step 1/9. Its function is as follows. Catalyzes the condensation of ATP and 5-phosphoribose 1-diphosphate to form N'-(5'-phosphoribosyl)-ATP (PR-ATP). Has a crucial role in the pathway because the rate of histidine biosynthesis seems to be controlled primarily by regulation of HisG enzymatic activity. The protein is ATP phosphoribosyltransferase of Leptospira biflexa serovar Patoc (strain Patoc 1 / Ames).